We begin with the raw amino-acid sequence, 251 residues long: Protein CMS1 (251 aa).

The disordered stretch occupies residues 1 to 37 (MSLDNDINTKKRKLQDDEKPRKKRKHKRPTRDDDADL).

The protein belongs to the CMS1 family.

Its subcellular location is the nucleus. Its function is as follows. May play a role in the regulation of DNA replication and cell cycle control. This Chaetomium thermophilum (strain DSM 1495 / CBS 144.50 / IMI 039719) (Thermochaetoides thermophila) protein is Protein CMS1 (CSM1).